The chain runs to 89 residues: Large ribosomal subunit protein uL29c (89 aa).

Belongs to the universal ribosomal protein uL29 family.

Its subcellular location is the plastid. The protein resides in the chloroplast. The protein is Large ribosomal subunit protein uL29c (rpl29) of Trieres chinensis (Marine centric diatom).